The following is a 154-amino-acid chain: UPF0225 protein Spro_2712 (154 aa).

The protein belongs to the UPF0225 family.

This Serratia proteamaculans (strain 568) protein is UPF0225 protein Spro_2712.